We begin with the raw amino-acid sequence, 366 residues long: Carbamoyl phosphate synthase small chain (366 aa).

Residues 1–171 form a CPSase region; it reads MLEKRYLVLE…KTPYVSTGSD (171 aa). L-glutamine-binding residues include Ser-47, Gly-221, and Gly-223. The region spanning 173–360 is the Glutamine amidotransferase type-1 domain; it reads SVVLLDFGKK…IAMMKDFKEK (188 aa). Cys-248 acts as the Nucleophile in catalysis. Leu-249, Gln-252, Asn-290, Gly-292, and Tyr-293 together coordinate L-glutamine. Catalysis depends on residues His-333 and Glu-335.

This sequence belongs to the CarA family. In terms of assembly, composed of two chains; the small (or glutamine) chain promotes the hydrolysis of glutamine to ammonia, which is used by the large (or ammonia) chain to synthesize carbamoyl phosphate. Tetramer of heterodimers (alpha,beta)4.

The enzyme catalyses hydrogencarbonate + L-glutamine + 2 ATP + H2O = carbamoyl phosphate + L-glutamate + 2 ADP + phosphate + 2 H(+). It catalyses the reaction L-glutamine + H2O = L-glutamate + NH4(+). It participates in amino-acid biosynthesis; L-arginine biosynthesis; carbamoyl phosphate from bicarbonate: step 1/1. Its pathway is pyrimidine metabolism; UMP biosynthesis via de novo pathway; (S)-dihydroorotate from bicarbonate: step 1/3. Functionally, small subunit of the glutamine-dependent carbamoyl phosphate synthetase (CPSase). CPSase catalyzes the formation of carbamoyl phosphate from the ammonia moiety of glutamine, carbonate, and phosphate donated by ATP, constituting the first step of 2 biosynthetic pathways, one leading to arginine and/or urea and the other to pyrimidine nucleotides. The small subunit (glutamine amidotransferase) binds and cleaves glutamine to supply the large subunit with the substrate ammonia. The protein is Carbamoyl phosphate synthase small chain of Staphylococcus epidermidis (strain ATCC 12228 / FDA PCI 1200).